Here is a 131-residue protein sequence, read N- to C-terminus: Small ribosomal subunit protein uS8 (131 aa).

The protein belongs to the universal ribosomal protein uS8 family. Part of the 30S ribosomal subunit. Contacts proteins S5 and S12.

Its function is as follows. One of the primary rRNA binding proteins, it binds directly to 16S rRNA central domain where it helps coordinate assembly of the platform of the 30S subunit. In Vesicomyosocius okutanii subsp. Calyptogena okutanii (strain HA), this protein is Small ribosomal subunit protein uS8.